Reading from the N-terminus, the 274-residue chain is DNA repair protein Rad1 (274 aa).

It belongs to the rad1 family. Component of the 9-1-1 checkpoint clamp complex consisting of Rad9 isoform A, Rad1 and Hus1-like; the interaction with Hus1-like is direct. Does not interact directly with Rad9; this interaction is probably mediated by Hus1-like. This complex probably also forms with Rad9 isoform B, however 9-1-1 complex containing Rad9 isoform A localizes to the nuclear periphery. In terms of tissue distribution, expressed in ovary.

Its subcellular location is the cytoplasm. It localises to the nucleus. The protein localises to the nucleus envelope. This Drosophila melanogaster (Fruit fly) protein is DNA repair protein Rad1.